The primary structure comprises 64 residues: MAFKIIASQCTQCGACEFECPSNAIELKGEKYVIDPKKCTECKGVFEIQQCASVCPMPKTCVPA.

One can recognise a 4Fe-4S ferredoxin-type domain in the interval 2–30 (AFKIIASQCTQCGACEFECPSNAIELKGE). 8 residues coordinate [4Fe-4S] cluster: cysteine 10, cysteine 13, cysteine 16, cysteine 20, cysteine 39, cysteine 42, cysteine 51, and cysteine 55.

It depends on [4Fe-4S] cluster as a cofactor.

This is Ferredoxin-like protein in nif region (fdxN) from Sinorhizobium fredii (strain NBRC 101917 / NGR234).